Reading from the N-terminus, the 230-residue chain is MMLKTVLRLPVCAALLALAAGCAMIPPEPVVTGPLTAPPPPPPQPSARPNGSIYQPSAYGNYPLFEDRRPRNVGDIVTIVLEEKTNAAKGVATNTSRDGSATLGVAAAPRFMDGIINDKLDTDISGGNTANGTGKSSANNTFTGTITTTVIGVLPNGNLQIAGEKQIAINRGSEYVRFSGVVDPRSITGSNTVSSTRVADARIEYRSKGVMDEVQTMGWLQRFFLIASPF.

Positions 1 to 21 (MMLKTVLRLPVCAALLALAAG) are cleaved as a signal peptide. Cysteine 22 is lipidated: N-palmitoyl cysteine. Cysteine 22 carries S-diacylglycerol cysteine lipidation. Residues 34-53 (PLTAPPPPPPQPSARPNGSI) form a disordered region. The span at 36-46 (TAPPPPPPQPS) shows a compositional bias: pro residues.

Belongs to the FlgH family. As to quaternary structure, the basal body constitutes a major portion of the flagellar organelle and consists of four rings (L,P,S, and M) mounted on a central rod.

The protein localises to the cell outer membrane. The protein resides in the bacterial flagellum basal body. Its function is as follows. Assembles around the rod to form the L-ring and probably protects the motor/basal body from shearing forces during rotation. This chain is Flagellar L-ring protein, found in Bordetella bronchiseptica (strain ATCC BAA-588 / NCTC 13252 / RB50) (Alcaligenes bronchisepticus).